A 204-amino-acid polypeptide reads, in one-letter code: Transcriptional regulator GfcR (204 aa).

This sequence belongs to the purine/pyrimidine phosphoribosyltransferase family. GfcR subfamily.

In Methanosarcina mazei (strain ATCC BAA-159 / DSM 3647 / Goe1 / Go1 / JCM 11833 / OCM 88) (Methanosarcina frisia), this protein is Transcriptional regulator GfcR.